We begin with the raw amino-acid sequence, 121 residues long: uncharacterized protein (121 aa).

Disordered regions lie at residues asparagine 38–glutamine 76 and serine 91–asparagine 121. The span at lysine 43–lysine 63 shows a compositional bias: basic residues. The segment covering glutamine 64 to glutamine 76 has biased composition (low complexity).

This is an uncharacterized protein from Schizosaccharomyces pombe (strain 972 / ATCC 24843) (Fission yeast).